The chain runs to 637 residues: Palmitoyltransferase Hip14 (637 aa).

The Cytoplasmic portion of the chain corresponds to M1 to R295. 5 ANK repeats span residues E77–A106, L111–I140, E144–L173, G177–M207, and H212–V242. The helical transmembrane segment at W296–T315 threads the bilayer. The Lumenal portion of the chain corresponds to V316 to T318. Residues L319 to L341 form a helical membrane-spanning segment. Topologically, residues F342–H345 are cytoplasmic. Residues L346–W366 traverse the membrane as a helical segment. Topologically, residues L367–A373 are lumenal. Residues V374–L394 form a helical membrane-spanning segment. The Cytoplasmic segment spans residues K395–H472. Positions S430 to W480 constitute a DHHC domain. C460 functions as the S-palmitoyl cysteine intermediate in the catalytic mechanism. The helical transmembrane segment at S473 to G493 threads the bilayer. Over S494–A520 the chain is Lumenal. Residues W521 to I541 form a helical membrane-spanning segment. Residues C542–V637 lie on the Cytoplasmic side of the membrane.

It belongs to the DHHC palmitoyltransferase family. AKR/ZDHHC17 subfamily. As to quaternary structure, interacts with dorsal-ventral patterning protein Sog. As to expression, in stage 13-15 embryos, expressed in the central nervous system. At the third instar larval stage, expressed in the ventral nerve cord and is enriched in the neuropil.

It localises to the golgi apparatus membrane. It is found in the presynaptic cell membrane. The catalysed reaction is L-cysteinyl-[protein] + hexadecanoyl-CoA = S-hexadecanoyl-L-cysteinyl-[protein] + CoA. In terms of biological role, probable palmitoyltransferase which is required for photoreceptor synaptic transmission and for the correct expression and localization of palmitoylated protein Csp and synaptosomal-associated protein Snap25. Probably palmitoylates Csp. Probably also palmitoylates the dorsal-ventral patterning protein Sog and promotes its secretion and activity and the stabilization of the membrane-bound form. Required for synaptic vesicle exocytosis. The chain is Palmitoyltransferase Hip14 from Drosophila melanogaster (Fruit fly).